The following is a 58-amino-acid chain: Sperm protamine P2 (58 aa).

The interval 1-58 is disordered; that stretch reads RRRRRRGKGRGKKRKGKGKKRGKGRRRGSKGRKKKKGKGKKRKRRRRRRRKGSKGKGK.

As to expression, gonads.

It localises to the nucleus. Its subcellular location is the chromosome. In terms of biological role, protamines substitute for histones in the chromatin of sperm during the haploid phase of spermatogenesis. They compact sperm DNA into a highly condensed, stable and inactive complex. The sequence is that of Sperm protamine P2 from Bolinus brandaris (Purple dye murex).